The primary structure comprises 439 residues: MASDDFDIVIEAMLEAPYKKEEDEQQRKEVKKDYPSNTTSSTSNSGNETSGSSTIGETSKKKRSRSHNKSRDRKRSRSRDRDRYRRRNSRSRSPGRQCRHRSRSWDRRHGSESRSRDHRREDRVHYRSPPLATGYRYGHSKSPHFREKSPVREPVDNLSPEERDARTVFCMQLAARIRPRDLEDFFSAVGKVRDVRIISDRNSRRSKGIAYVEFCEIQSVPLAIGLTGQRLLGVPIIVQASQAEKNRLAAMANNLQKGNGGPMRLYVGSLHFNITEDMLRGIFEPFGKIDNIVLMKDSDTGRSKGYGFITFSDSECARRALEQLNGFELAGRPMRVGHVTERLDGGTDITFPDGDQELDLGSAGGRFQLMAKLAEGAGIQLPSTAAAAAAAAAQAAALQLNGAVPLGALNPAALTALSPALNLASQCFQLSSLFTPQTM.

The interval 13 to 159 is disordered; it reads MLEAPYKKEE…PVREPVDNLS (147 aa). A compositionally biased stretch (basic and acidic residues) spans 17 to 34; it reads PYKKEEDEQQRKEVKKDY. The span at 36–57 shows a compositional bias: low complexity; the sequence is SNTTSSTSNSGNETSGSSTIGE. Over residues 60–90 the composition is skewed to basic residues; it reads KKKRSRSHNKSRDRKRSRSRDRDRYRRRNSR. A compositionally biased stretch (basic and acidic residues) spans 103–125; sequence RSWDRRHGSESRSRDHRREDRVH. Serine 128 and serine 149 each carry phosphoserine. Basic and acidic residues predominate over residues 144–159; sequence HFREKSPVREPVDNLS. 2 consecutive RRM domains span residues 166 to 243 and 263 to 341; these read RTVF…ASQA and MRLY…HVTE.

The protein belongs to the splicing factor SR family. Aryl sulfonamide anticancer drugs, such as indisulam (E7070) or E7820, promote ubiquitination and subsequent degradation by the DCX(DCAF15) complex. Aryl sulfonamide anticancer drugs change the substrate specificity of DCAF15 by acting as a molecular glue that promotes binding between DCAF15 and weak affinity interactor RBM23. Highly expressed in placenta, liver, skeletal muscle, heart and kidney. Expressed at lower levels in the colon, thymus, spleen, small intestine and lung.

The protein localises to the nucleus. RNA-binding protein that acts both as a transcription coactivator and pre-mRNA splicing factor. Regulates steroid hormone receptor-mediated transcription, independently of the pre-mRNA splicing factor activity. The polypeptide is Probable RNA-binding protein 23 (Homo sapiens (Human)).